The following is a 2320-amino-acid chain: Bromodomain and WD repeat-containing protein 1 (2320 aa).

8 WD repeats span residues 184-223, 226-265, 268-311, 322-365, 366-405, 424-463, 466-506, and 514-553; these read GHLS…LLST, GHSA…PVAV, GHTG…LKFS, RPGV…AELE, SHTD…WRSI, FMKP…LLHN, GHAD…KMKH, and QGHG…PYEK. Positions 668–691 are disordered; sequence QRMGADQDTIPRGLSNGEETPRRG. Thr-687 is modified (phosphothreonine). A phosphoserine mark is found at Ser-696, Ser-701, and Ser-710. Disordered stretches follow at residues 809-867 and 895-925; these read NRSW…RYSD and SEDE…ENLR. Low complexity-rich tracts occupy residues 814 to 824 and 854 to 867; these read ELSSGNESSSS and YSES…RYSD. The segment covering 907 to 918 has biased composition (basic residues); it reads PKRRRKRKKENK. One can recognise a Bromo 1 domain in the interval 1157 to 1264; it reads WGQKSRDEEC…DQLLKFIKNQ (108 aa). The disordered stretch occupies residues 1271-1304; it reads ELSNTSENDEQNAEDLDDSDLPKTSSGRRRVHDG. Positions 1277–1289 are enriched in acidic residues; sequence ENDEQNAEDLDDS. A Phosphoserine modification is found at Ser-1289. The 106-residue stretch at 1313 to 1418 folds into the Bromo 2 domain; that stretch reads YVESNWKKQC…ALFEEKMKKI (106 aa). The interval 1434–1593 is disordered; the sequence is RSQRFKQRQN…TGPVSLANGC (160 aa). Positions 1443-1454 are enriched in polar residues; the sequence is NCKGDSQPNKSI. Residues 1455–1464 are compositionally biased toward basic residues; it reads RNLKPKRLKS. Residue Ser-1475 is modified to Phosphoserine. Positions 1475–1496 are enriched in polar residues; it reads SPTQSTSSRTAYLGTHKTSAGI. Thr-1477 bears the Phosphothreonine mark. Residue Ser-1479 is modified to Phosphoserine. Residues 1497 to 1509 show a composition bias toward low complexity; the sequence is SSGVTSGDSSDSA. The segment covering 1520 to 1529 has biased composition (polar residues); it reads PITNGSTLSE. The segment covering 1535 to 1548 has biased composition (low complexity); sequence SLATSLSSSASSSS. The segment covering 1549 to 1561 has biased composition (basic and acidic residues); the sequence is EESKESSRARESS. 5 positions are modified to phosphoserine: Ser-1605, Ser-1607, Ser-1678, Ser-1683, and Ser-1686. Disordered regions lie at residues 1670-1805, 1817-1839, and 1862-1899; these read ARKK…KYNT, KILS…KCHK, and DHGC…KISR. The segment covering 1676 to 1687 has biased composition (basic and acidic residues); the sequence is HNSEDEQSLKSE. A compositionally biased stretch (polar residues) spans 1701 to 1712; it reads PVSSSHTAQSNV. Basic and acidic residues-rich tracts occupy residues 1715–1728 and 1751–1769; these read SENR…DLRV and LKIE…DHAC. Residues Ser-1755, Ser-1756, Ser-1786, Ser-1788, Ser-1793, and Ser-1820 each carry the phosphoserine modification. The span at 1821-1832 shows a compositional bias: acidic residues; sequence DSEDSESEEQDR. Phosphothreonine is present on Thr-1867. A phosphoserine mark is found at Ser-1871, Ser-1904, Ser-1905, Ser-1907, Ser-1910, and Ser-1943. Position 1955 is a phosphothreonine (Thr-1955). 2 disordered regions span residues 2014-2077 and 2112-2184; these read LNGD…TLAQ and TKVI…TKGK. 3 positions are modified to phosphoserine: Ser-2018, Ser-2020, and Ser-2052. Basic and acidic residues-rich tracts occupy residues 2054–2069 and 2114–2139; these read EDSK…DRTF and VIHD…ENVK. The segment covering 2140–2165 has biased composition (polar residues); the sequence is ISETTGNSKFRPDTSSKSSDLGSVTE. Position 2164 is a phosphothreonine (Thr-2164). Phosphoserine is present on residues Ser-2166 and Val-2214.

In terms of assembly, interacts with SMARCA4. Ubiquitously expressed. Expressed in respiratory epithelial cells and testis spermatozoa.

The protein resides in the cytoplasm. Its subcellular location is the nucleus. The protein localises to the cell projection. It is found in the cilium membrane. It localises to the cytoskeleton. The protein resides in the flagellum axoneme. Functionally, may be a transcriptional activator. May be involved in chromatin remodeling. Plays a role in the regulation of cell morphology and cytoskeletal organization. Required in the control of cell shape. This chain is Bromodomain and WD repeat-containing protein 1 (BRWD1), found in Homo sapiens (Human).